The primary structure comprises 392 residues: Erythronate-4-phosphate dehydrogenase (392 aa).

2 residues coordinate substrate: Ser-48 and Thr-69. Position 149 (Asp-149) interacts with NAD(+). Arg-215 is a catalytic residue. Asp-239 contributes to the NAD(+) binding site. Glu-244 is a catalytic residue. His-261 acts as the Proton donor in catalysis. Residue Gly-264 participates in NAD(+) binding. Tyr-265 lines the substrate pocket.

It belongs to the D-isomer specific 2-hydroxyacid dehydrogenase family. PdxB subfamily. Homodimer.

The protein resides in the cytoplasm. It catalyses the reaction 4-phospho-D-erythronate + NAD(+) = (R)-3-hydroxy-2-oxo-4-phosphooxybutanoate + NADH + H(+). It functions in the pathway cofactor biosynthesis; pyridoxine 5'-phosphate biosynthesis; pyridoxine 5'-phosphate from D-erythrose 4-phosphate: step 2/5. In terms of biological role, catalyzes the oxidation of erythronate-4-phosphate to 3-hydroxy-2-oxo-4-phosphonooxybutanoate. This Salinibacter ruber (strain DSM 13855 / M31) protein is Erythronate-4-phosphate dehydrogenase.